The following is a 316-amino-acid chain: L-lactate dehydrogenase 3 (316 aa).

Positions 16, 37, 42, and 68 each coordinate NAD(+). Arg91 contacts substrate. Residues Ser104, Ala121–Asn123, and Thr146 contribute to the NAD(+) site. Residue Asn123–Asp126 participates in substrate binding. A substrate-binding site is contributed by Asp151 to Arg154. Residues Arg156 and His171 each coordinate beta-D-fructose 1,6-bisphosphate. His178 serves as the catalytic Proton acceptor. Substrate is bound at residue Thr233.

The protein belongs to the LDH/MDH superfamily. LDH family. Homotetramer.

It localises to the cytoplasm. The catalysed reaction is (S)-lactate + NAD(+) = pyruvate + NADH + H(+). The protein operates within fermentation; pyruvate fermentation to lactate; (S)-lactate from pyruvate: step 1/1. With respect to regulation, allosterically activated by fructose 1,6-bisphosphate (FBP). Functionally, catalyzes the conversion of lactate to pyruvate. The chain is L-lactate dehydrogenase 3 from Bacillus thuringiensis subsp. konkukian (strain 97-27).